A 408-amino-acid chain; its full sequence is Protein SLX4IP (408 aa).

Residues lysine 61 and lysine 79 each participate in a glycyl lysine isopeptide (Lys-Gly) (interchain with G-Cter in SUMO2) cross-link. At serine 130 the chain carries Phosphoserine. Residues lysine 167 and lysine 176 each participate in a glycyl lysine isopeptide (Lys-Gly) (interchain with G-Cter in SUMO2) cross-link. The interval threonine 173–isoleucine 226 is disordered. Polar residues predominate over residues glycine 208–methionine 219. Serine 213 is subject to Phosphoserine. Residues lysine 239 and lysine 242 each participate in a glycyl lysine isopeptide (Lys-Gly) (interchain with G-Cter in SUMO2) cross-link. Over residues valine 243–glutamine 255 the composition is skewed to polar residues. Residues valine 243 to leucine 313 form a disordered region. Residues lysine 256, lysine 291, lysine 347, lysine 356, and lysine 372 each participate in a glycyl lysine isopeptide (Lys-Gly) (interchain with G-Cter in SUMO2) cross-link. The tract at residues leucine 365–histidine 408 is disordered. Over residues asparagine 374–proline 397 the composition is skewed to polar residues. Residue threonine 392 is modified to Phosphothreonine. Positions threonine 398–histidine 408 are enriched in basic residues. Lysine 399 is covalently cross-linked (Glycyl lysine isopeptide (Lys-Gly) (interchain with G-Cter in SUMO2)).

Belongs to the SLX4IP family. Interacts with SLX4/BTBD12; subunit of different structure-specific endonucleases.

This is Protein SLX4IP (SLX4IP) from Homo sapiens (Human).